Here is a 298-residue protein sequence, read N- to C-terminus: Acetylglutamate kinase (298 aa).

Residues 69–70 (GG), Arg-91, and Asn-191 each bind substrate.

Belongs to the acetylglutamate kinase family. ArgB subfamily.

It localises to the cytoplasm. It carries out the reaction N-acetyl-L-glutamate + ATP = N-acetyl-L-glutamyl 5-phosphate + ADP. Its pathway is amino-acid biosynthesis; L-arginine biosynthesis; N(2)-acetyl-L-ornithine from L-glutamate: step 2/4. Its function is as follows. Catalyzes the ATP-dependent phosphorylation of N-acetyl-L-glutamate. This chain is Acetylglutamate kinase, found in Neisseria meningitidis serogroup C (strain 053442).